Here is a 355-residue protein sequence, read N- to C-terminus: Aromatic amino acid aminotransferase (355 aa).

Lys-217 is subject to N6-(pyridoxal phosphate)lysine.

The protein belongs to the class-II pyridoxal-phosphate-dependent aminotransferase family. In terms of assembly, homodimer. Requires pyridoxal 5'-phosphate as cofactor.

The catalysed reaction is an aromatic L-alpha-amino acid + 2-oxoglutarate = an aromatic oxo-acid + L-glutamate. Functionally, aminotransferase that catalyzes the conversion of aromatic amino acids and 2-oxoglutarate into corresponding aromatic oxo acids and L-glutamate. The protein is Aromatic amino acid aminotransferase of Mycobacterium avium (strain 104).